The sequence spans 454 residues: uncharacterized protein (454 aa).

The disordered stretch occupies residues 422 to 454; that stretch reads EWLPPAHLDHGQPRTNSYFHPEKLLHDSDEDDP.

Belongs to the Rv1128c/1148c/1588c/1702c/1945/3466 family.

This is an uncharacterized protein from Mycobacterium tuberculosis (strain CDC 1551 / Oshkosh).